Here is a 514-residue protein sequence, read N- to C-terminus: Bifunctional purine biosynthesis protein PurH (514 aa).

The MGS-like domain occupies 1–145 (MIKRALISVS…KNYQDVAVIV (145 aa)).

Belongs to the PurH family.

It catalyses the reaction (6R)-10-formyltetrahydrofolate + 5-amino-1-(5-phospho-beta-D-ribosyl)imidazole-4-carboxamide = 5-formamido-1-(5-phospho-D-ribosyl)imidazole-4-carboxamide + (6S)-5,6,7,8-tetrahydrofolate. The catalysed reaction is IMP + H2O = 5-formamido-1-(5-phospho-D-ribosyl)imidazole-4-carboxamide. Its pathway is purine metabolism; IMP biosynthesis via de novo pathway; 5-formamido-1-(5-phospho-D-ribosyl)imidazole-4-carboxamide from 5-amino-1-(5-phospho-D-ribosyl)imidazole-4-carboxamide (10-formyl THF route): step 1/1. It functions in the pathway purine metabolism; IMP biosynthesis via de novo pathway; IMP from 5-formamido-1-(5-phospho-D-ribosyl)imidazole-4-carboxamide: step 1/1. The polypeptide is Bifunctional purine biosynthesis protein PurH (Ruminiclostridium cellulolyticum (strain ATCC 35319 / DSM 5812 / JCM 6584 / H10) (Clostridium cellulolyticum)).